The sequence spans 311 residues: MQEIQKNTKKEQYNLNKLQKRLRRNVGEAIADFNMIEEGDRIMVCLSGGKDSYTMLEILRNLQQSAPINFSLVAVNLDQKQPGFPEHILPAYLEQLGVEYKIVEENTYGIVKEKIPEGKTTCSLCSRLRRGILYRTATELGATKIALGHHRDDILQTLFLNMFYGGKMKGMPPKLMSDDGKHIVIRPLAYCREKDIVRFAEAKAFPIIPCNLCGSQPNLQRQVIADMLRDWDKRYPGRIETMFSAMQNVVPSHLCDTNLFDFKGITHGSEVIDGGDLAFDREEIPLQPAGWQPEEDDTALEALRLDVIEVK.

Positions 47-52 match the PP-loop motif motif; that stretch reads SGGKDS. [4Fe-4S] cluster-binding residues include Cys-122, Cys-125, and Cys-213.

It belongs to the TtcA family. As to quaternary structure, homodimer. Mg(2+) is required as a cofactor. [4Fe-4S] cluster serves as cofactor.

It is found in the cytoplasm. The enzyme catalyses cytidine(32) in tRNA + S-sulfanyl-L-cysteinyl-[cysteine desulfurase] + AH2 + ATP = 2-thiocytidine(32) in tRNA + L-cysteinyl-[cysteine desulfurase] + A + AMP + diphosphate + H(+). The protein operates within tRNA modification. In terms of biological role, catalyzes the ATP-dependent 2-thiolation of cytidine in position 32 of tRNA, to form 2-thiocytidine (s(2)C32). The sulfur atoms are provided by the cysteine/cysteine desulfurase (IscS) system. This chain is tRNA-cytidine(32) 2-sulfurtransferase, found in Salmonella typhi.